The primary structure comprises 104 residues: U-scoloptoxin(10)-Cw1a (104 aa).

The signal sequence occupies residues 1-23 (MNKTVAVFFAVICVICVIKSCKT).

It belongs to the scoloptoxin-10 family. In terms of processing, contains 3 disulfide bonds. In terms of tissue distribution, expressed by the venom gland.

The protein localises to the secreted. The protein is U-scoloptoxin(10)-Cw1a of Cormocephalus westwoodi (Westwood's green centipede).